A 443-amino-acid chain; its full sequence is Signal recognition particle 54 kDa protein (443 aa).

GTP contacts are provided by residues 107–114, 189–193, and 247–250; these read GIQGSGKT, DTAGR, and TKLD.

This sequence belongs to the GTP-binding SRP family. SRP54 subfamily. As to quaternary structure, part of the signal recognition particle protein translocation system, which is composed of SRP and FtsY. Archaeal SRP consists of a 7S RNA molecule of 300 nucleotides and two protein subunits: SRP54 and SRP19.

The protein localises to the cytoplasm. The catalysed reaction is GTP + H2O = GDP + phosphate + H(+). Involved in targeting and insertion of nascent membrane proteins into the cytoplasmic membrane. Binds to the hydrophobic signal sequence of the ribosome-nascent chain (RNC) as it emerges from the ribosomes. The SRP-RNC complex is then targeted to the cytoplasmic membrane where it interacts with the SRP receptor FtsY. The chain is Signal recognition particle 54 kDa protein from Pyrococcus furiosus (strain ATCC 43587 / DSM 3638 / JCM 8422 / Vc1).